A 329-amino-acid polypeptide reads, in one-letter code: UDP-sugar transporter sqv-7 (329 aa).

The next 9 membrane-spanning stretches (helical) occupy residues 15 to 34, 41 to 63, 86 to 108, 129 to 151, 155 to 174, 187 to 209, 224 to 246, 253 to 275, and 280 to 302; these read SAVF…KILL, SFLF…AKMF, YFFN…FTVL, SKAV…IYDL, ALGY…LGVY, YGLM…QYTG, TSSV…YSLV, SALT…GMFS, and VFQW…YTYV.

This sequence belongs to the TPT transporter family. SLC35D subfamily.

It localises to the golgi apparatus membrane. Functionally, acts as a transporter of UDP-glucuronic acid (UDP-GlcA), UDP-N-acetylgalactosamine (UDP-GalNAc) and UDP-galactose (UDP-Gal) from the cytoplasm into the Golgi lumen. Involved in the biosynthesis of glycoconjugates that play a pivotal role in development. Involved in the synthesis of chondroitin sulfate and heparan sulfate proteoglycans. Required for embryonic development. Involved in vulva epithelium invagination and embryonic development. Involved in the directed migration of hermaphrodite-specific neurons. This is UDP-sugar transporter sqv-7 (sqv-7) from Caenorhabditis elegans.